We begin with the raw amino-acid sequence, 224 residues long: Peroxiredoxin-6 (224 aa).

Residues 5–169 form the Thioredoxin domain; it reads LLLGDEAPNF…ILRVIISLQL (165 aa). The required and sufficient for targeting to lysosomes and lamellar bodies stretch occupies residues 31–40; that stretch reads DSWGILFSHP. T44 is modified (phosphothreonine). Catalysis depends on C47, which acts as the Cysteine sulfenic acid (-SOH) intermediate; for peroxidase activity. K63 bears the N6-acetyllysine mark. Y89 is modified (phosphotyrosine). D140 acts as the For phospholipase activity in catalysis. At T177 the chain carries Phosphothreonine; by MAPK. K209 bears the N6-acetyllysine; alternate mark. K209 is modified (N6-succinyllysine; alternate).

This sequence belongs to the peroxiredoxin family. Prx6 subfamily. Homodimer. Interacts with GSTP1; mediates PRDX6 glutathionylation and regeneration. Interacts with APEX1. Interacts with STH. May interact with FAM168B. May interact with HTR2A. In terms of processing, irreversibly inactivated by overoxidation of Cys-47 to sulfinic acid (Cys-SO(2)H) and sulfonic acid (Cys-SO(3)H) forms upon oxidative stress. Post-translationally, phosphorylation at Thr-177 by MAP kinases increases the phospholipase activity of the enzyme. The phosphorylated form exhibits a greater lysophosphatidylcholine acyltransferase activity compared to the non-phosphorylated form.

Its subcellular location is the cytoplasm. It localises to the lysosome. The enzyme catalyses a hydroperoxide + 2 glutathione = an alcohol + glutathione disulfide + H2O. The catalysed reaction is a 1,2-diacyl-sn-glycero-3-phosphocholine + H2O = a 1-acyl-sn-glycero-3-phosphocholine + a fatty acid + H(+). It carries out the reaction a 1-acyl-sn-glycero-3-phosphocholine + an acyl-CoA = a 1,2-diacyl-sn-glycero-3-phosphocholine + CoA. It catalyses the reaction 1-hexadecanoyl-sn-glycero-3-phosphocholine + hexadecanoyl-CoA = 1,2-dihexadecanoyl-sn-glycero-3-phosphocholine + CoA. The enzyme catalyses 1,2-dihexadecanoyl-sn-glycero-3-phosphocholine + H2O = 1-hexadecanoyl-sn-glycero-3-phosphocholine + hexadecanoate + H(+). Functionally, thiol-specific peroxidase that catalyzes the reduction of hydrogen peroxide and organic hydroperoxides to water and alcohols, respectively. Can reduce H(2)O(2) and short chain organic, fatty acid, and phospholipid hydroperoxides. Also has phospholipase activity, and can therefore either reduce the oxidized sn-2 fatty acyl group of phospholipids (peroxidase activity) or hydrolyze the sn-2 ester bond of phospholipids (phospholipase activity). These activities are dependent on binding to phospholipids at acidic pH and to oxidized phospholipds at cytosolic pH. Plays a role in cell protection against oxidative stress by detoxifying peroxides and in phospholipid homeostasis. Exhibits acyl-CoA-dependent lysophospholipid acyltransferase which mediates the conversion of lysophosphatidylcholine (1-acyl-sn-glycero-3-phosphocholine or LPC) into phosphatidylcholine (1,2-diacyl-sn-glycero-3-phosphocholine or PC). Shows a clear preference for LPC as the lysophospholipid and for palmitoyl CoA as the fatty acyl substrate. This chain is Peroxiredoxin-6 (PRDX6), found in Sus scrofa (Pig).